A 784-amino-acid polypeptide reads, in one-letter code: Homeobox-leucine zipper protein ROC2 (784 aa).

A disordered region spans residues 60–113 (AESGDNMIRSRASDPLGGDEFESKSGSENVDGVSVDDQDPNQRPRKKRYHRHTQ). The span at 102-113 (RPRKKRYHRHTQ) shows a compositional bias: basic residues. The segment at residues 104–163 (RKKRYHRHTQHQIQEMEAFFKECPHPDDKQRKELSRELGLEPLQVKFWFQNKRTQMKNQH) is a DNA-binding region (homeobox). The stretch at 158–234 (QMKNQHERHE…DRISAIAAKY (77 aa)) forms a coiled coil. The region spanning 286–523 (SEVDKPMIVE…LDRQCERLAS (238 aa)) is the START domain.

It belongs to the HD-ZIP homeobox family. Class IV subfamily.

The protein resides in the nucleus. Probable transcription factor. The chain is Homeobox-leucine zipper protein ROC2 (ROC2) from Oryza sativa subsp. japonica (Rice).